The following is a 555-amino-acid chain: Trehalase (555 aa).

Positions Met-1 to Gln-16 are cleaved as a signal peptide. Asn-46 is a glycosylation site (N-linked (GlcNAc...) asparagine). Substrate is bound by residues Arg-164, Trp-171–Asp-172, and Asn-208. The N-linked (GlcNAc...) asparagine glycan is linked to Asn-216. Substrate-binding positions include Arg-217 to Gln-219, Arg-282 to Glu-284, and Gly-316. Catalysis depends on Asp-318, which acts as the Proton donor/acceptor. N-linked (GlcNAc...) asparagine glycosylation is found at Asn-334 and Asn-371. The active-site Proton donor/acceptor is Glu-516. Residue Glu-531 participates in substrate binding.

This sequence belongs to the glycosyl hydrolase 37 family. In terms of tissue distribution, bean-shaped accessory glands (bags).

The protein localises to the secreted. The catalysed reaction is alpha,alpha-trehalose + H2O = alpha-D-glucose + beta-D-glucose. The chain is Trehalase from Tenebrio molitor (Yellow mealworm beetle).